A 400-amino-acid chain; its full sequence is LIM homeobox transcription factor 1-beta.1 (400 aa).

LIM zinc-binding domains lie at 54–113 and 114–175; these read AVCE…LFAA and KCSG…EKDL. A disordered region spans residues 175–228; it reads LLSSGSPDDSDSVKSDDEEGDVKPGKGRVNQGKGSDDGKDPRRPKRPRTILTTQ. Positions 218–277 form a DNA-binding region, homeobox; that stretch reads PKRPRTILTTQQRRAFKASFEVSSKPCRKVRETLAAETGLSVRVVQVWFQNQRAKIKKLA.

In terms of tissue distribution, shows a temporal expression pattern in three main areas: neural, kidney and limbs. From stage 13 onwards, expressed in regions of the nervous system including the placodes and otic vesicles, eye, specific sets of neurons, and in discreet regions of the neural tube. From stage 13, also expressed in the presumptive pronephros, and from stage 27 expression is predominant in the capsule of the pronephric glomus. Also expressed in the developing forelimbs and hindlimbs. In metamorphosing tadpoles, expressed in the eye, brain, muscle and mesonephric kidney.

The protein resides in the nucleus. Functionally, required for early specification of the kidney glomus, lying upstream of wt1 in the pathway controlling glomus differentiation. The balance in levels and expression patterns of binding partners such as lhx1/lim-1 influences differentiation into glomus or tubule derivatives. Involved in specification of serotonergic neurons. This Xenopus laevis (African clawed frog) protein is LIM homeobox transcription factor 1-beta.1.